We begin with the raw amino-acid sequence, 212 residues long: Urease accessory protein UreG (212 aa).

GTP is bound at residue 15-22 (GPVGSGKT).

Belongs to the SIMIBI class G3E GTPase family. UreG subfamily. As to quaternary structure, homodimer. UreD, UreF and UreG form a complex that acts as a GTP-hydrolysis-dependent molecular chaperone, activating the urease apoprotein by helping to assemble the nickel containing metallocenter of UreC. The UreE protein probably delivers the nickel.

It localises to the cytoplasm. Its function is as follows. Facilitates the functional incorporation of the urease nickel metallocenter. This process requires GTP hydrolysis, probably effectuated by UreG. In Opitutus terrae (strain DSM 11246 / JCM 15787 / PB90-1), this protein is Urease accessory protein UreG.